Here is a 661-residue protein sequence, read N- to C-terminus: CD180 antigen (661 aa).

A signal peptide spans 1–23; it reads MAFDVSCFFWVVLFSAGCKVITS. Over 24–626 the chain is Extracellular; sequence WDQMCIEKEA…KLSDVKLSCG (603 aa). One can recognise an LRRNT domain in the interval 33 to 53; the sequence is ANKTYNCENLGLSEIPDTLPN. N-linked (GlcNAc...) asparagine glycosylation is found at Asn34, Asn53, Asn70, and Asn78. 7 LRR repeats span residues 54–75, 78–99, 102–123, 126–147, 150–171, 174–195, and 201–221; these read TTEF…TFSR, NLTF…TFQS, QLST…SLNG, SLKH…PVHN, NLES…KDFP, NLKV…DMRS, and NLSL…AFDS. Asn201, Asn234, and Asn244 each carry an N-linked (GlcNAc...) asparagine glycan. 5 LRR repeats span residues 275 to 296, 299 to 320, 322 to 343, 346 to 366, and 371 to 391; these read SVES…TFQC, QLQE…MKGL, LLKK…SAAN, SLTH…VGCL, and NLQT…CSLQ. 2 N-linked (GlcNAc...) asparagine glycosylation sites follow: Asn394 and Asn402. 7 LRR repeats span residues 397 to 418, 421 to 442, 446 to 466, 470 to 493, 497 to 518, 521 to 544, and 546 to 564; these read HLQT…AFKE, QLEL…SPFQ, FLQV…HLLA, VLRH…NLLQ, SLEV…AFHS, KMSH…SHLK, and IYLN…RLLP. N-linked (GlcNAc...) asparagine glycosylation is present at Asn451. Asn573 carries N-linked (GlcNAc...) asparagine glycosylation. The region spanning 577 to 627 is the LRRCT domain; it reads NPLDCTCSNIHFLTWYKENLHKLEGSEETTCANPPSLRGVKLSDVKLSCGI. The chain crosses the membrane as a helical span at residues 627-650; that stretch reads ITAIGIFFLIVFLLLLAILLFFAV. Residues 651-661 lie on the Cytoplasmic side of the membrane; the sequence is KYLLRWKYQHI.

This sequence belongs to the Toll-like receptor family. In terms of assembly, M-shaped tetramer of two CD180-LY86 heterodimers. Expressed mainly on mature peripherical B cells. Detected in spleen, lymph node and appendix. Not detected in pre-B and -T cells.

The protein localises to the cell membrane. Functionally, may cooperate with MD-1 and TLR4 to mediate the innate immune response to bacterial lipopolysaccharide (LPS) in B-cells. Leads to NF-kappa-B activation. Also involved in the life/death decision of B-cells. The protein is CD180 antigen (CD180) of Homo sapiens (Human).